The following is a 515-amino-acid chain: MEELQGYLEEYRSRQQQFLYPLLFQEYIYVFAYDHGLNSSIFYEPQNSLGYDNKFSSVLVKRLIIRMYQKNYLIYSVNDIYQNIFVGHNNYFYFHFFSQILSEGFAVIVEIPFSLQLISSLEEKEIPKSHNLQSSHSIFPFLEDKLLHLNYLSDILIPYPAHMEILVQMLQSWIQDALSLHLLQFLLHEYYNWNSLIIPNKSIYVFSKDNKRLFCFLYNLYIYEYEFLLVFPCKQSSFLRLISSGVLLERIHFYVKIEHLGVCRIFCQKTLWIFKDPFIHYIRYQGKSILGSRGTHFLMKKWKYHLVHFWQYYFHFWSQPYRIDTKKLSNYSFYFLGYFSSVQMNSSMVRNQMLENSFLMDTLTKKLDTRIPIIPLIRSLSKAQFCTVSGYPISKPIWTDLADCDIINRFGRICRKLSHYHSGSSKKQSLYRMKYILRLSCARTLARKHKSSARSFLQRLSSGLLEEFFTEEEQVISLIFPKRTSFYLYGSYRERIWYLDIIRINDLVNSLLVTT.

This sequence belongs to the intron maturase 2 family. MatK subfamily.

The protein localises to the plastid. The protein resides in the chloroplast. Functionally, usually encoded in the trnK tRNA gene intron. Probably assists in splicing its own and other chloroplast group II introns. In Alpinia zerumbet (Shell ginger), this protein is Maturase K.